A 301-amino-acid chain; its full sequence is Polyamine aminopropyltransferase (301 aa).

One can recognise a PABS domain in the interval 4 to 240 (WHWLLEWQTP…GLWGFVYGGV (237 aa)). Residue Gln-33 coordinates S-methyl-5'-thioadenosine. Spermidine-binding residues include His-64 and Glu-89. S-methyl-5'-thioadenosine-binding positions include Asp-109 and 141-142 (DG). Asp-159 acts as the Proton acceptor in catalysis.

It belongs to the spermidine/spermine synthase family. In terms of assembly, homodimer or homotetramer.

Its subcellular location is the cytoplasm. It carries out the reaction S-adenosyl 3-(methylsulfanyl)propylamine + putrescine = S-methyl-5'-thioadenosine + spermidine + H(+). Its pathway is amine and polyamine biosynthesis; spermidine biosynthesis; spermidine from putrescine: step 1/1. In terms of biological role, catalyzes the irreversible transfer of a propylamine group from the amino donor S-adenosylmethioninamine (decarboxy-AdoMet) to putrescine (1,4-diaminobutane) to yield spermidine. This is Polyamine aminopropyltransferase from Saccharolobus islandicus (strain L.S.2.15 / Lassen #1) (Sulfolobus islandicus).